A 182-amino-acid chain; its full sequence is Adenylate kinase (182 aa).

12–17 serves as a coordination point for ATP; that stretch reads GAGKGT. The interval 32–61 is NMP; it reads STGDLLREEVSGGTDLGKKAELIMNKGELV. AMP contacts are provided by residues threonine 33, arginine 38, 59 to 61, 85 to 88, and glutamine 92; these read ELV and GFPR. Residues 126 to 132 form an LID region; sequence GRGRKDD. Arginine 127 is a binding site for ATP. AMP is bound by residues arginine 129 and arginine 140. Residue glycine 168 participates in ATP binding.

This sequence belongs to the adenylate kinase family. Monomer.

Its subcellular location is the cytoplasm. It carries out the reaction AMP + ATP = 2 ADP. It participates in purine metabolism; AMP biosynthesis via salvage pathway; AMP from ADP: step 1/1. Its function is as follows. Catalyzes the reversible transfer of the terminal phosphate group between ATP and AMP. Plays an important role in cellular energy homeostasis and in adenine nucleotide metabolism. The sequence is that of Adenylate kinase from Prochlorococcus marinus (strain SARG / CCMP1375 / SS120).